The following is a 285-amino-acid chain: Probable endonuclease 4 (285 aa).

Zn(2+) contacts are provided by His69, His109, Glu145, Asp179, His182, His216, Asp229, His231, and Glu261.

Belongs to the AP endonuclease 2 family. It depends on Zn(2+) as a cofactor.

It carries out the reaction Endonucleolytic cleavage to 5'-phosphooligonucleotide end-products.. In terms of biological role, endonuclease IV plays a role in DNA repair. It cleaves phosphodiester bonds at apurinic or apyrimidinic (AP) sites, generating a 3'-hydroxyl group and a 5'-terminal sugar phosphate. This Salmonella paratyphi A (strain AKU_12601) protein is Probable endonuclease 4.